The primary structure comprises 427 residues: Tol-Pal system protein TolB (427 aa).

Positions 1-23 (MKLIARLMSMCAVLFFAINSAYA) are cleaved as a signal peptide.

It belongs to the TolB family. As to quaternary structure, the Tol-Pal system is composed of five core proteins: the inner membrane proteins TolA, TolQ and TolR, the periplasmic protein TolB and the outer membrane protein Pal. They form a network linking the inner and outer membranes and the peptidoglycan layer.

It localises to the periplasm. Part of the Tol-Pal system, which plays a role in outer membrane invagination during cell division and is important for maintaining outer membrane integrity. The protein is Tol-Pal system protein TolB of Actinobacillus succinogenes (strain ATCC 55618 / DSM 22257 / CCUG 43843 / 130Z).